Here is a 313-residue protein sequence, read N- to C-terminus: Protein FixB (313 aa).

An FAD-binding site is contributed by Leu-255–Asp-283.

This sequence belongs to the ETF alpha-subunit/FixB family. As to quaternary structure, heterodimer of FixA and FixB.

It participates in amine and polyamine metabolism; carnitine metabolism. In terms of biological role, required for anaerobic carnitine reduction. May bring reductant to CaiA. The chain is Protein FixB from Escherichia coli O6:K15:H31 (strain 536 / UPEC).